Reading from the N-terminus, the 79-residue chain is Sec-independent protein translocase protein TatA (79 aa).

The chain crosses the membrane as a helical span at residues 1–21 (MGEFSLTHILLLAVIFLIFFG). The interval 52-79 (DIHDNQQVSHQNKQSMGQTQKQGENQNS) is disordered. Polar residues predominate over residues 56–79 (NQQVSHQNKQSMGQTQKQGENQNS).

Belongs to the TatA/E family. In terms of assembly, the Tat system comprises two distinct complexes: a TatABC complex, containing multiple copies of TatA, TatB and TatC subunits, and a separate TatA complex, containing only TatA subunits. Substrates initially bind to the TatABC complex, which probably triggers association of the separate TatA complex to form the active translocon.

It localises to the cell inner membrane. Functionally, part of the twin-arginine translocation (Tat) system that transports large folded proteins containing a characteristic twin-arginine motif in their signal peptide across membranes. TatA could form the protein-conducting channel of the Tat system. The sequence is that of Sec-independent protein translocase protein TatA from Bdellovibrio bacteriovorus (strain ATCC 15356 / DSM 50701 / NCIMB 9529 / HD100).